A 314-amino-acid polypeptide reads, in one-letter code: L-lactate dehydrogenase 2 (314 aa).

NAD(+) contacts are provided by residues Val-16, Asp-37, Lys-42, Tyr-68, and 82–83 (GV). 2 residues coordinate substrate: Gln-85 and Arg-91. Residues Ser-104, 121–123 (ASN), and Thr-146 contribute to the NAD(+) site. Substrate is bound at residue 123-126 (NPVD). 151–154 (DTTR) is a binding site for substrate. The beta-D-fructose 1,6-bisphosphate site is built by Arg-156 and His-171. The Proton acceptor role is filled by His-178. Tyr-223 bears the Phosphotyrosine mark. Residue Thr-232 participates in substrate binding.

This sequence belongs to the LDH/MDH superfamily. LDH family. As to quaternary structure, homotetramer.

The protein localises to the cytoplasm. It carries out the reaction (S)-lactate + NAD(+) = pyruvate + NADH + H(+). Its pathway is fermentation; pyruvate fermentation to lactate; (S)-lactate from pyruvate: step 1/1. Allosterically activated by fructose 1,6-bisphosphate (FBP). Its function is as follows. Catalyzes the conversion of lactate to pyruvate. The sequence is that of L-lactate dehydrogenase 2 from Lactococcus lactis subsp. lactis (strain IL1403) (Streptococcus lactis).